The chain runs to 331 residues: Phosphoribosylformylglycinamidine cyclo-ligase (331 aa).

It belongs to the AIR synthase family.

Its subcellular location is the cytoplasm. It catalyses the reaction 2-formamido-N(1)-(5-O-phospho-beta-D-ribosyl)acetamidine + ATP = 5-amino-1-(5-phospho-beta-D-ribosyl)imidazole + ADP + phosphate + H(+). It participates in purine metabolism; IMP biosynthesis via de novo pathway; 5-amino-1-(5-phospho-D-ribosyl)imidazole from N(2)-formyl-N(1)-(5-phospho-D-ribosyl)glycinamide: step 2/2. This Clostridium novyi (strain NT) protein is Phosphoribosylformylglycinamidine cyclo-ligase.